The sequence spans 89 residues: Cell division protein ZapA (89 aa).

This sequence belongs to the ZapA family. Type 2 subfamily. As to quaternary structure, homodimer. Interacts with FtsZ.

The protein resides in the cytoplasm. In terms of biological role, activator of cell division through the inhibition of FtsZ GTPase activity, therefore promoting FtsZ assembly into bundles of protofilaments necessary for the formation of the division Z ring. It is recruited early at mid-cell but it is not essential for cell division. The protein is Cell division protein ZapA of Bacillus thuringiensis (strain Al Hakam).